The following is a 630-amino-acid chain: DELLA protein DWARF8 (630 aa).

The segment at 1–35 (MKREYQDAGGSGGDMGSSKDKMMAAAAGAGEQEEE) is disordered. Residues 38–42 (DELLA) carry the DELLA motif motif. The segment at 161 to 222 (PIPSPVAAPS…AAPPATQASA (62 aa)) is disordered. 2 stretches are compositionally biased toward low complexity: residues 165 to 176 (PVAAPSADPSTD) and 191 to 222 (TSSS…QASA). Positions 234-623 (VDTQEAGIRL…RPLIATSAWR (390 aa)) constitute a GRAS domain. Residues 241 to 297 (IRLVHALLACAEAVQQENFSAAEALVKQIPMLASSQGGAMRKVAAYFGEALARRVYR) are leucine repeat I (LRI). The LxCxE motif motif lies at 248–252 (LACAE). The VHIID stretch occupies residues 316-381 (HAHFYESCPY…GGPPSFRLTG (66 aa)). The short motif at 347–351 (VHVVD) is the VHIID element. Residues 395–427 (QVGWKLAQFAHTIRVDFQYRGLVAATLADLEPF) are leucine repeat II (LRII). The segment at 443–544 (IAVNSVFELH…EVYLGRQICN (102 aa)) is PFYRE. Positions 451–455 (LHRLL) match the LXXLL motif motif. The segment at 547–623 (ACEGAERTER…RPLIATSAWR (77 aa)) is SAW.

Belongs to the GRAS family. DELLA subfamily. Post-translationally, phosphorylated. Ubiquitinated. Upon GA application it is ubiquitinated, leading to its subsequent degradation.

Its subcellular location is the nucleus. In terms of biological role, probable transcriptional regulator that acts as a repressor of the gibberellin (GA) signaling pathway. Probably acts by participating in large multiprotein complexes that repress transcription of GA-inducible genes. Upon GA application, it is degraded by the proteasome, allowing the GA signaling pathway. The chain is DELLA protein DWARF8 (D8) from Zea mays (Maize).